Consider the following 385-residue polypeptide: Probable protein phosphatase 2C 38 (385 aa).

Residues 46–357 form the PPM-type phosphatase domain; that stretch reads VAGEFSMSVI…DDITVIVVFL (312 aa). Ser77 is subject to Phosphoserine. 4 residues coordinate Mn(2+): Asp88, Gly89, Asp289, and Asp348.

Belongs to the PP2C family. As to quaternary structure, interacts with BIK1. It depends on Mg(2+) as a cofactor. Mn(2+) is required as a cofactor. Post-translationally, phosphorylation at Ser-77 induces dissociation of PP2C38 from BIK1.

It is found in the cell membrane. The enzyme catalyses O-phospho-L-seryl-[protein] + H2O = L-seryl-[protein] + phosphate. The catalysed reaction is O-phospho-L-threonyl-[protein] + H2O = L-threonyl-[protein] + phosphate. Its function is as follows. May dephosphorylate and repress plasma membrane H(+)-ATPases (PM H(+)-ATPases, e.g. AHA1 and AHA2), thus influencing negatively plant growth and fitness. Involved in pathogen-associated molecular pattern (PAMP)-triggered immunity (PTI) signaling. Negatively regulates immune responses by controlling the phosphorylation and activation status of BIK1, a central rate-limiting kinase in PTI signaling. Impairs the phosphorylation of the NADPH oxidase RBOHD by BIK1. The sequence is that of Probable protein phosphatase 2C 38 from Arabidopsis thaliana (Mouse-ear cress).